Reading from the N-terminus, the 317-residue chain is Ricin B-like lectin EULS3 (317 aa).

Basic residues predominate over residues M1–H11. The segment at M1–P157 is disordered. Over residues V25 to P36 the composition is skewed to pro residues. Positions H136 to G146 are enriched in polar residues. The region spanning T168–F315 is the Ricin B-type lectin domain.

Interacts (via N-terminus) with ATS3A and ATS3B. As to expression, expressed in roots, rosette leaves, stems, cauline leaves and flowers.

The protein resides in the nucleus. The protein localises to the cytoplasm. Functionally, lectin which binds carbohydrates in vitro. Interacts through its lectin domain with glycan structures containing one or more Lewis X, Lewis Y or lactosamine motifs. May play a role in abiotic stress responses. May play a role in abscisic acid-induced stomatal closure. May play a role in disease resistance against Pseudomonas syringae through its involvement in stomatal movement. The sequence is that of Ricin B-like lectin EULS3 from Arabidopsis thaliana (Mouse-ear cress).